A 418-amino-acid chain; its full sequence is Tektin-1 (418 aa).

Coiled-coil stretches lie at residues 20–107, 134–177, 266–308, and 332–383; these read NKSQ…SYKE, QELQ…DLKD, NGLK…QQEG, and VAQY…ENTI.

Belongs to the tektin family. In terms of assembly, microtubule inner protein component of sperm flagellar doublet microtubules. In terms of processing, ubiquitinated, leading to its degradation. Deubiquitinated by USP16, promoting its stability. Predominantly expressed in testis.

It localises to the cytoplasm. Its subcellular location is the cytoskeleton. The protein resides in the cilium axoneme. The protein localises to the flagellum axoneme. In terms of biological role, microtubule inner protein (MIP) part of the dynein-decorated doublet microtubules (DMTs) in cilia and flagellar axoneme. Forms filamentous polymers in the walls of ciliary and flagellar microtubules. The chain is Tektin-1 (Tekt1) from Rattus norvegicus (Rat).